The sequence spans 310 residues: 4-hydroxyproline 2-epimerase (310 aa).

Residue C88 is the Proton acceptor of the active site. Substrate-binding positions include 89–90 (GH), H208, and D232. C236 acts as the Proton donor in catalysis. 237 to 238 (GT) is a binding site for substrate.

The protein belongs to the proline racemase family.

It carries out the reaction trans-4-hydroxy-L-proline = cis-4-hydroxy-D-proline. Functionally, catalyzes the epimerization of trans-4-hydroxy-L-proline (t4LHyp) to cis-4-hydroxy-D-proline (c4DHyp). Is likely involved in a degradation pathway that converts t4LHyp to alpha-ketoglutarate. Displays no proline racemase activity. In Burkholderia cenocepacia (strain ATCC BAA-245 / DSM 16553 / LMG 16656 / NCTC 13227 / J2315 / CF5610) (Burkholderia cepacia (strain J2315)), this protein is 4-hydroxyproline 2-epimerase.